Reading from the N-terminus, the 452-residue chain is MKVISNFQNKKILILGLAKSGEAAAKLLTKLGALVTVNDSKPFDQNPAAQALLEEGIKVICGSHPVELLDENFEYMVKNPGIPYDNPMVKRALAKEIPILTEVELAYFVSEAPIIGITGSNGKTTTTTMIADVLNAGGQSALLSGNIGYPASKVVQKAIAGDTLVMELSSFQLVGVNAFRPHIAVITNLMPTHLDYHGSFEDYVAAKWMIQAQMTESDYLILNANQEISATLAKTTKATVIPFSTQKVVDGAYLKDGILYFKEQAIIAATDLGVPGSHNIENALATIAVAKLSGIADDIIAQCLSHFGGVKHRLQRVGQIKDITFYNDSKSTNILATQKALSGFDNSRLILIAGGLDRGNEFDDLVPDLLGLKQMIILGESAERMKRAANKAEVSYLEARNVAEATELAFKLAQTGDTILLSPANASWDMYPNFEVRGDEFLATFDCLRGDA.

119 to 125 lines the ATP pocket; the sequence is GSNGKTT.

This sequence belongs to the MurCDEF family.

The protein localises to the cytoplasm. It carries out the reaction UDP-N-acetyl-alpha-D-muramoyl-L-alanine + D-glutamate + ATP = UDP-N-acetyl-alpha-D-muramoyl-L-alanyl-D-glutamate + ADP + phosphate + H(+). It functions in the pathway cell wall biogenesis; peptidoglycan biosynthesis. Functionally, cell wall formation. Catalyzes the addition of glutamate to the nucleotide precursor UDP-N-acetylmuramoyl-L-alanine (UMA). This Streptococcus pyogenes serotype M1 protein is UDP-N-acetylmuramoylalanine--D-glutamate ligase (murD).